We begin with the raw amino-acid sequence, 612 residues long: Mineralocorticoid receptor (612 aa).

The tract at residues 1–228 (GNEIADSTVS…STGPSRPSKV (228 aa)) is modulating. Zn(2+) contacts are provided by Cys-229, Cys-232, Cys-246, Cys-249, Cys-269, Cys-275, Cys-285, and Cys-288. 2 NR C4-type zinc fingers span residues 229 to 249 (CLVC…CGSC) and 269 to 293 (CAGR…LQKC). Residues 229-298 (CLVCGDEASG…RLQKCLQAGM (70 aa)) constitute a DNA-binding region (nuclear receptor). A hinge region spans residues 299 to 349 (NLGARKSKKLGKLKGVHEEHPQQPLQQTPTASPKEDTTLTSSSKEPSANSN). The segment at 310 to 348 (KLKGVHEEHPQQPLQQTPTASPKEDTTLTSSSKEPSANS) is disordered. Over residues 339 to 348 (SSSKEPSANS) the composition is skewed to low complexity. The 243-residue stretch at 350–592 (SLVPLISAVS…EFPAMLVEII (243 aa)) folds into the NR LBD domain. Positions 398 and 404 each coordinate 21-hydroxyprogesterone. Asn-398 and Gln-404 together coordinate aldosterone. Progesterone-binding residues include Asn-398 and Gln-404. Residues 410 to 413 (KWAK) form an important for coactivator binding region. Residues Arg-445 and Thr-573 each contribute to the 21-hydroxyprogesterone site. Aldosterone contacts are provided by Arg-445 and Thr-573. Progesterone-binding residues include Arg-445 and Thr-573.

It belongs to the nuclear hormone receptor family. NR3 subfamily.

The protein localises to the cytoplasm. It localises to the nucleus. Functionally, receptor for both mineralocorticoids (MC) such as aldosterone and glucocorticoids (GC) such as corticosterone or cortisol. Binds to mineralocorticoid response elements (MRE) and transactivates target genes. The effect of MC is to increase ion and water transport and thus raise extracellular fluid volume and blood pressure and lower potassium levels. The protein is Mineralocorticoid receptor (nr3c2) of Xenopus laevis (African clawed frog).